The sequence spans 1708 residues: Clathrin heavy chain 1 (1708 aa).

The globular terminal domain stretch occupies residues 1 to 492; sequence MAAANAPIAM…VDNDLALKIY (492 aa). 7 WD40-like repeat regions span residues 25 to 67, 68 to 113, 114 to 155, 156 to 205, 206 to 270, 271 to 314, and 315 to 343; these read FVTF…RPIT, ADSA…MPEQ, VVFW…ANLA, NNQI…QALE, AHAA…PDFQ, DDFP…ISPD, and PIFL…ATVN. Residues 462-478 are binding site for the uncoating ATPase, involved in lattice disassembly; that stretch reads ENWLAEDKLECSEELGD. The tract at residues 493 to 536 is flexible linker; sequence IKARATPKVVAAFAERREFDKILIYSKQVGYTPDYLFLLQTILR. The tract at residues 537 to 648 is distal segment; the sequence is TDPQGAVNFA…RALQHYTELP (112 aa). Residues 537-1708 form a heavy chain arm region; that stretch reads TDPQGAVNFA…AYGMPPMGSY (1172 aa). CHCR repeat units lie at residues 551-697, 700-842, 847-986, 993-1138, 1142-1283, 1288-1434, and 1437-1580; these read QMEG…QIVV, AKEY…PEDF, ILSV…QLID, LPES…VSEA, FIRA…FRLA, LNII…DLIN, and LNVL…KECF. The proximal segment stretch occupies residues 653-1708; it reads VMVNTHAIEP…AYGMPPMGSY (1056 aa). Residues 1227-1536 are involved in binding clathrin light chain; the sequence is AAKIIYAFIS…YIYKKAGRWK (310 aa). The segment at 1564–1708 is trimerization; that stretch reads SEDLLVYFIE…AYGMPPMGSY (145 aa).

It belongs to the clathrin heavy chain family. In terms of assembly, clathrin triskelions, composed of 3 heavy chains and 3 light chains, are the basic subunits of the clathrin coat.

It localises to the cytoplasmic vesicle membrane. Its subcellular location is the membrane. It is found in the coated pit. In terms of biological role, clathrin is the major protein of the polyhedral coat of coated pits and vesicles. The chain is Clathrin heavy chain 1 from Oryza sativa subsp. japonica (Rice).